We begin with the raw amino-acid sequence, 554 residues long: Formate--tetrahydrofolate ligase (554 aa).

65–72 provides a ligand contact to ATP; that stretch reads TPLGEGKT.

Belongs to the formate--tetrahydrofolate ligase family.

It carries out the reaction (6S)-5,6,7,8-tetrahydrofolate + formate + ATP = (6R)-10-formyltetrahydrofolate + ADP + phosphate. It functions in the pathway one-carbon metabolism; tetrahydrofolate interconversion. The chain is Formate--tetrahydrofolate ligase from Aliivibrio salmonicida (strain LFI1238) (Vibrio salmonicida (strain LFI1238)).